The sequence spans 374 residues: MRIGMICPYSFDVPGGVQSHVLQLAEVMRARGQQVRVLAPASPDVSLPEYVVSAGRAIPIPYNGSVARLQFSPAVHSRVRRWLVDGDFDVLHLHEPNAPSLSMWALRVAEGPIVATFHTSTTKSLTLSVFQGVLRPWHEKIIGRIAVSDLARRWQMEALGSDAVEIPNGVNVDSLSSAPQLAGYPRLGKTVLFLGRYDEPRKGMSVLLDALPGVMECFDDVQLLIVGRGDEEQLRSQAGGLVEHIRFLGQVDDAGKAAAMRSADVYCAPNIGGESFGIVLVEAMAAGTPVVASDLDAFRRVLRDGEVGHLVPAGDSAALADALVALLRNDVLRERYVAAGAEAVRRYDWSVVASQIMRVYETVATSGSKVQVAS.

Residues Tyr-9 and Gly-16 each coordinate GDP-alpha-D-mannose. A 1,2-diacyl-sn-glycero-3-phospho-(1D-myo-inositol)-binding positions include Gln-18, 62-63 (YN), and Arg-68. GDP-alpha-D-mannose-binding positions include Arg-196, 201-202 (RK), 251-253 (VDD), Lys-256, 274-278 (ESFGI), and Glu-282.

Belongs to the glycosyltransferase group 1 family. Glycosyltransferase 4 subfamily. As to quaternary structure, monomer. Mg(2+) serves as cofactor.

The protein localises to the cell membrane. It carries out the reaction a 1,2-diacyl-sn-glycero-3-phospho-(1D-myo-inositol) + GDP-alpha-D-mannose = a 1,2-diacyl-sn-glycero-3-phospho-[alpha-D-mannopyranosyl-(1&lt;-&gt;6)-D-myo-inositol] + GDP + H(+). Its pathway is phospholipid metabolism; phosphatidylinositol metabolism. Involved in the biosynthesis of phosphatidyl-myo-inositol mannosides (PIM) which are early precursors in the biosynthesis of lipomannans (LM) and lipoarabinomannans (LAM). Catalyzes the addition of a mannosyl residue from GDP-D-mannose (GDP-Man) to the position 2 of the carrier lipid phosphatidyl-myo-inositol (PI) to generate a phosphatidyl-myo-inositol bearing an alpha-1,2-linked mannose residue (PIM1). In Mycobacterium leprae (strain TN), this protein is Phosphatidyl-myo-inositol mannosyltransferase.